Here is a 343-residue protein sequence, read N- to C-terminus: Branched-chain-amino-acid aminotransferase (343 aa).

Lys182 is modified (N6-(pyridoxal phosphate)lysine).

Belongs to the class-IV pyridoxal-phosphate-dependent aminotransferase family. Requires pyridoxal 5'-phosphate as cofactor.

It carries out the reaction L-leucine + 2-oxoglutarate = 4-methyl-2-oxopentanoate + L-glutamate. The catalysed reaction is L-isoleucine + 2-oxoglutarate = (S)-3-methyl-2-oxopentanoate + L-glutamate. It catalyses the reaction L-valine + 2-oxoglutarate = 3-methyl-2-oxobutanoate + L-glutamate. Its pathway is amino-acid biosynthesis; L-isoleucine biosynthesis; L-isoleucine from 2-oxobutanoate: step 4/4. It functions in the pathway amino-acid biosynthesis; L-leucine biosynthesis; L-leucine from 3-methyl-2-oxobutanoate: step 4/4. The protein operates within amino-acid biosynthesis; L-valine biosynthesis; L-valine from pyruvate: step 4/4. Acts on leucine, isoleucine and valine. The protein is Branched-chain-amino-acid aminotransferase (ilvE) of Haemophilus influenzae (strain ATCC 51907 / DSM 11121 / KW20 / Rd).